A 372-amino-acid chain; its full sequence is Mannan endo-1,4-beta-mannosidase 8 (372 aa).

Substrate-binding residues include tryptophan 57 and asparagine 172. The Proton donor role is filled by glutamate 173. A substrate-binding site is contributed by tyrosine 253. The active-site Nucleophile is the glutamate 293. Tryptophan 335 provides a ligand contact to substrate.

It belongs to the glycosyl hydrolase 5 (cellulase A) family. Expressed in stems and leaves and seeds.

The catalysed reaction is Random hydrolysis of (1-&gt;4)-beta-D-mannosidic linkages in mannans, galactomannans and glucomannans.. The chain is Mannan endo-1,4-beta-mannosidase 8 (MAN8) from Oryza sativa subsp. japonica (Rice).